A 183-amino-acid polypeptide reads, in one-letter code: MPVLYSTGYDLVNLCIGETKKNIKLTEDILDAGMELDFILREYCDSKLPLEEDPFNDDTGRFYVLDKSQIEDNAWILLYLELVVATSFRNHITHGLTSLKILKVAMEISRSPGVSVNMGLDAYDATFYISYKDFCKARVGKEVDRIALVRRILDPQLEILRLGGYTLSSQTIKPSNTMDAGSF.

The protein belongs to the UPF0725 (EMB2204) family.

This chain is UPF0725 protein At4g11700, found in Arabidopsis thaliana (Mouse-ear cress).